The sequence spans 131 residues: Fumarate reductase subunit C (131 aa).

The next 3 membrane-spanning stretches (helical) occupy residues 30 to 50, 57 to 77, and 109 to 129; these read EGTA…LFAL, WMGF…LITL, and IIKG…YVAL.

The protein belongs to the FrdC family. In terms of assembly, part of an enzyme complex containing four subunits: a flavoprotein (FrdA), an iron-sulfur protein (FrdB), and two hydrophobic anchor proteins (FrdC and FrdD).

It localises to the cell inner membrane. Its function is as follows. Two distinct, membrane-bound, FAD-containing enzymes are responsible for the catalysis of fumarate and succinate interconversion; fumarate reductase is used in anaerobic growth, and succinate dehydrogenase is used in aerobic growth. Anchors the catalytic components of the fumarate reductase complex to the cell inner membrane, binds quinones. The polypeptide is Fumarate reductase subunit C (Salmonella dublin (strain CT_02021853)).